Here is a 131-residue protein sequence, read N- to C-terminus: Sec-independent protein translocase protein TatB (131 aa).

The helical transmembrane segment at 2–22 (FDGIGFMELLLIGILGLVVLG) threads the bilayer. Composition is skewed to polar residues over residues 68-83 (ESQG…QDSI) and 116-131 (AEKS…KPNG). The disordered stretch occupies residues 68–131 (ESQGLKNLSP…TGANSDKPNG (64 aa)).

Belongs to the TatB family. As to quaternary structure, the Tat system comprises two distinct complexes: a TatABC complex, containing multiple copies of TatA, TatB and TatC subunits, and a separate TatA complex, containing only TatA subunits. Substrates initially bind to the TatABC complex, which probably triggers association of the separate TatA complex to form the active translocon.

Its subcellular location is the cell inner membrane. In terms of biological role, part of the twin-arginine translocation (Tat) system that transports large folded proteins containing a characteristic twin-arginine motif in their signal peptide across membranes. Together with TatC, TatB is part of a receptor directly interacting with Tat signal peptides. TatB may form an oligomeric binding site that transiently accommodates folded Tat precursor proteins before their translocation. This chain is Sec-independent protein translocase protein TatB, found in Shewanella pealeana (strain ATCC 700345 / ANG-SQ1).